Here is a 504-residue protein sequence, read N- to C-terminus: Beta-xylosidase (504 aa).

Glu160 (proton donor) is an active-site residue. Residue Glu280 is the Nucleophile of the active site.

It belongs to the glycosyl hydrolase 39 family.

The catalysed reaction is Hydrolysis of (1-&gt;4)-beta-D-xylans, to remove successive D-xylose residues from the non-reducing termini.. This is Beta-xylosidase (xynB) from Geobacillus stearothermophilus (Bacillus stearothermophilus).